The following is a 960-amino-acid chain: CWF19-like protein 2 (960 aa).

Disordered regions lie at residues 1 to 222 (MAAY…AGVV), 261 to 552 (EFQK…ELIL), 624 to 648 (AWPV…AIET), and 712 to 731 (AQKE…AVQE). A coiled-coil region spans residues 13-101 (SIKSRKESKR…KKAKKEKKDE (89 aa)). Residues 16–52 (SRKESKREERERVIQKAKEKFEKEERRKAERKARGED) are compositionally biased toward basic and acidic residues. Residues 73 to 96 (KTKKAKKEKKAKKSKKEKKKKAKK) show a composition bias toward basic residues. Positions 108 to 117 (SSEDSEDEWV) are enriched in acidic residues. A compositionally biased stretch (low complexity) spans 135 to 146 (EATPSSSSASNN). Residues 163–279 (SVADRRAQKE…EDAAYGERRD (117 aa)) adopt a coiled-coil conformation. Composition is skewed to basic and acidic residues over residues 165-181 (ADRR…ERQK), 261-372 (EFQK…DDLS), and 404-417 (KPVD…EAGF). Over residues 507–518 (SAVQDSETPTLQ) the composition is skewed to polar residues. A coiled-coil region spans residues 540-605 (SESEEEEEEE…IKDQSKRASK (66 aa)). Over residues 541 to 552 (ESEEEEEEELIL) the composition is skewed to acidic residues. Positions 713-731 (QKERAGRDEERQRNKAVQE) are enriched in basic and acidic residues.

This sequence belongs to the CWF19 family.

The polypeptide is CWF19-like protein 2 (cwf19l2) (Danio rerio (Zebrafish)).